Consider the following 323-residue polypeptide: Aspartate carbamoyltransferase catalytic subunit (323 aa).

Arg71 and Thr72 together coordinate carbamoyl phosphate. Residue Lys99 coordinates L-aspartate. Carbamoyl phosphate is bound by residues Arg121, His151, and Gln154. Positions 184 and 239 each coordinate L-aspartate. The carbamoyl phosphate site is built by Gly280 and Pro281.

Belongs to the aspartate/ornithine carbamoyltransferase superfamily. ATCase family. As to quaternary structure, heterododecamer (2C3:3R2) of six catalytic PyrB chains organized as two trimers (C3), and six regulatory PyrI chains organized as three dimers (R2).

It catalyses the reaction carbamoyl phosphate + L-aspartate = N-carbamoyl-L-aspartate + phosphate + H(+). It participates in pyrimidine metabolism; UMP biosynthesis via de novo pathway; (S)-dihydroorotate from bicarbonate: step 2/3. Functionally, catalyzes the condensation of carbamoyl phosphate and aspartate to form carbamoyl aspartate and inorganic phosphate, the committed step in the de novo pyrimidine nucleotide biosynthesis pathway. This is Aspartate carbamoyltransferase catalytic subunit from Cupriavidus pinatubonensis (strain JMP 134 / LMG 1197) (Cupriavidus necator (strain JMP 134)).